The chain runs to 205 residues: Holliday junction branch migration complex subunit RuvA (205 aa).

The tract at residues 1-64 (MIGKLKGVVD…EDMIRLYGFR (64 aa)) is domain I. Residues 65 to 143 (SDAEREWFRL…AFAPVDPALV (79 aa)) are domain II. Positions 144–152 (RLAGAVEAR) are flexible linker. The tract at residues 153–205 (TAPQPVADAISALVNLGYPQAQASAAVAAALQSAGAEAEAKTLIRLGLRELAR) is domain III.

The protein belongs to the RuvA family. As to quaternary structure, homotetramer. Forms an RuvA(8)-RuvB(12)-Holliday junction (HJ) complex. HJ DNA is sandwiched between 2 RuvA tetramers; dsDNA enters through RuvA and exits via RuvB. An RuvB hexamer assembles on each DNA strand where it exits the tetramer. Each RuvB hexamer is contacted by two RuvA subunits (via domain III) on 2 adjacent RuvB subunits; this complex drives branch migration. In the full resolvosome a probable DNA-RuvA(4)-RuvB(12)-RuvC(2) complex forms which resolves the HJ.

It localises to the cytoplasm. In terms of biological role, the RuvA-RuvB-RuvC complex processes Holliday junction (HJ) DNA during genetic recombination and DNA repair, while the RuvA-RuvB complex plays an important role in the rescue of blocked DNA replication forks via replication fork reversal (RFR). RuvA specifically binds to HJ cruciform DNA, conferring on it an open structure. The RuvB hexamer acts as an ATP-dependent pump, pulling dsDNA into and through the RuvAB complex. HJ branch migration allows RuvC to scan DNA until it finds its consensus sequence, where it cleaves and resolves the cruciform DNA. This is Holliday junction branch migration complex subunit RuvA from Methylobacterium sp. (strain 4-46).